The following is a 665-amino-acid chain: Target of rapamycin complex 2 subunit sin1 (665 aa).

S62 carries the post-translational modification Phosphoserine. Polar residues-rich tracts occupy residues 65-83 (IVAN…TKQV) and 100-109 (YATSDLSESS). Residues 65 to 112 (IVANDTVSNVRKPSDTKQVNGAGGQVNHSRAEDSDYATSDLSESSDVG) are disordered. S133 bears the Phosphoserine mark. The region spanning 255 to 392 (TSALRALLEH…ATPAQIKENQ (138 aa)) is the CRIM domain. Residues 395–433 (YPFKSKHPTSIPEANNKTHIRHTSSTSSQSQKQAQDVKD) are disordered. Residues S404, S490, S502, and S530 each carry the phosphoserine modification. Residues 517-537 (RDKKGSTQQLPTSSPQNSVYG) are disordered. Positions 522-536 (STQQLPTSSPQNSVY) are enriched in polar residues. The SIN1-type PH domain occupies 558 to 659 (TYQEFLVWKR…IVSRIRALMN (102 aa)).

This sequence belongs to the SIN1 family. In terms of assembly, the target of rapamycin complex 2 (TORC2) is composed of at least bit61, pop3/wat1, sin1, ste20 and tor1. Interacts with the sty1 MAP kinase. In terms of processing, phosphorylated; under environmental stress. Either Ser-61 or Ser-62 and Ser-298, Ser-299 or Ser-301 are phosphorylated as well.

Component of the mechanistic target of rapamycin complex 2 (mTORC2), which regulates multiple cellular processes to control cell growth in response to environmental signals. In response to signals, TORC2 phosphorylates AGC protein kinase family members, such as gad8. TORC2 is required for cell survival under various stress conditions. TORC2 positively controls G1 cell-cycle arrest, sexual development and amino acid uptake. Positively regulates amino acid uptake through the control of expression of amino acid permeases. Within the mTORC2 complex, sin1 acts as a substrate adapter which recognizes and binds AGC protein kinase family members for phosphorylation by tor1. The polypeptide is Target of rapamycin complex 2 subunit sin1 (Schizosaccharomyces pombe (strain 972 / ATCC 24843) (Fission yeast)).